A 368-amino-acid polypeptide reads, in one-letter code: Queuine tRNA-ribosyltransferase (368 aa).

The active-site Proton acceptor is the D89. Residues D89–F93, D143, and G216 contribute to the substrate site. The tract at residues G247 to D253 is RNA binding. The active-site Nucleophile is the D266. Positions T271 to R275 are RNA binding; important for wobble base 34 recognition. 4 residues coordinate Zn(2+): C304, C306, C309, and H335.

Belongs to the queuine tRNA-ribosyltransferase family. In terms of assembly, homodimer. Within each dimer, one monomer is responsible for RNA recognition and catalysis, while the other monomer binds to the replacement base PreQ1. Zn(2+) serves as cofactor.

The catalysed reaction is 7-aminomethyl-7-carbaguanine + guanosine(34) in tRNA = 7-aminomethyl-7-carbaguanosine(34) in tRNA + guanine. It participates in tRNA modification; tRNA-queuosine biosynthesis. Functionally, catalyzes the base-exchange of a guanine (G) residue with the queuine precursor 7-aminomethyl-7-deazaguanine (PreQ1) at position 34 (anticodon wobble position) in tRNAs with GU(N) anticodons (tRNA-Asp, -Asn, -His and -Tyr). Catalysis occurs through a double-displacement mechanism. The nucleophile active site attacks the C1' of nucleotide 34 to detach the guanine base from the RNA, forming a covalent enzyme-RNA intermediate. The proton acceptor active site deprotonates the incoming PreQ1, allowing a nucleophilic attack on the C1' of the ribose to form the product. After dissociation, two additional enzymatic reactions on the tRNA convert PreQ1 to queuine (Q), resulting in the hypermodified nucleoside queuosine (7-(((4,5-cis-dihydroxy-2-cyclopenten-1-yl)amino)methyl)-7-deazaguanosine). This Buchnera aphidicola subsp. Schizaphis graminum (strain Sg) protein is Queuine tRNA-ribosyltransferase.